A 522-amino-acid chain; its full sequence is Cytochrome P450 monooxygenase FGSG_08207 (522 aa).

The chain crosses the membrane as a helical span at residues 10–30 (LLLSKPVVLGLAACALLFLIG). Residues Asn104 and Asn155 are each glycosylated (N-linked (GlcNAc...) asparagine). Cys441 contacts heme.

The protein belongs to the cytochrome P450 family. Heme serves as cofactor.

It localises to the membrane. Its pathway is secondary metabolite biosynthesis. In terms of biological role, cytochrome P450 monooxygenase; part of the gene cluster that mediates the biosynthesis of the lipopeptide fusaristatin A. Fusaristatin A consists of a polyketide chain linked to three amino acid residues glutamine (Gln), dehydroalanine (dehydro-Ala), and beta-aminoisobutyric acid. The biosynthesis starts with formation of a linear polyketide chain by the highly reducing polyketide synthase PKS6. The gene cluster does not contain an acyl-CoA ligase or an acyl-transferase, and it is therefore predicted that the polyketide is transferred directly to the nonribosomal peptide synthetase NRPS7. Modules 1-3 from NRPS7 incorporate dehydro-Ala, Gln, and beta-aminoisobutyric acid in the compound, which is released by cyclization. The beta-aminoisobutyric acid units are most likely not freely available to the NRPS, but can be synthesized from thymine, which requires a dehydrogenase, a monooxygenase, and an aminotransferase. The fusaristatin A cluster contains a cytochrome P450 monooxygenase (FGSG_08207) and an aminotransferase (FGSG_17085), which theoretically can perform two of the enzymatic steps. The enzymes may however also be involved in biosynthesis of dehydroalanine or modification of the polyketide. The dehydro-Ala residue can be a result of cyclization, where serine is dehydrated. The last gene of the cluster encodes a protein with an A/B barrel domain found in variable enzymes, which hampers functional prediction. In Gibberella zeae (strain ATCC MYA-4620 / CBS 123657 / FGSC 9075 / NRRL 31084 / PH-1) (Wheat head blight fungus), this protein is Cytochrome P450 monooxygenase FGSG_08207.